The chain runs to 469 residues: DNA-binding transcriptional regulator NtrC (469 aa).

Residues 5-119 (IVWVVDDDSS…EAVALVERAI (115 aa)) enclose the Response regulatory domain. At D54 the chain carries 4-aspartylphosphate. The Sigma-54 factor interaction domain maps to 140–369 (MIGEAPAMQD…LENTCRWLTV (230 aa)). ATP is bound by residues 168–175 (GESGTGKE) and 231–240 (ADGGTLFLDE). The H-T-H motif DNA-binding region spans 445–464 (KQEAARLLGWGRNTLTRKLK).

Post-translationally, phosphorylated and dephosphorylated by NtrB.

The protein localises to the cytoplasm. Member of the two-component regulatory system NtrB/NtrC, which controls expression of the nitrogen-regulated (ntr) genes in response to nitrogen limitation. Phosphorylated NtrC binds directly to DNA and stimulates the formation of open promoter-sigma54-RNA polymerase complexes. The protein is DNA-binding transcriptional regulator NtrC (glnG) of Salmonella typhimurium (strain LT2 / SGSC1412 / ATCC 700720).